Here is an 87-residue protein sequence, read N- to C-terminus: Putative outer membrane protein ArbH (87 aa).

A signal peptide spans 1–23 (MKIKNSYLVIASLLYPISFISTA).

Belongs to the porin LamB (TC 1.B.3) family.

The protein localises to the cell outer membrane. In terms of biological role, may be a sugar porin with a broad carbohydrate specificity. The protein is Putative outer membrane protein ArbH (arbH) of Dickeya chrysanthemi (Pectobacterium chrysanthemi).